The following is a 371-amino-acid chain: Opine oxidase subunit B (371 aa).

As to quaternary structure, heterodimer of a subunit A and a subunit B.

It participates in opine metabolism; octopine degradation. Functionally, oxidative cleavage of octopine into L-arginine and pyruvate. This chain is Opine oxidase subunit B (ooxB), found in Agrobacterium tumefaciens (strain Ach5).